Here is a 360-residue protein sequence, read N- to C-terminus: 3-dehydroquinate synthase (360 aa).

NAD(+)-binding positions include 71-76 (DGEQFK), 105-109 (GVIGD), 129-130 (TT), K142, K151, and 169-172 (FLKT). Zn(2+)-binding residues include E184, H247, and H264.

This sequence belongs to the sugar phosphate cyclases superfamily. Dehydroquinate synthase family. Requires NAD(+) as cofactor. It depends on Co(2+) as a cofactor. Zn(2+) is required as a cofactor.

The protein localises to the cytoplasm. It carries out the reaction 7-phospho-2-dehydro-3-deoxy-D-arabino-heptonate = 3-dehydroquinate + phosphate. It participates in metabolic intermediate biosynthesis; chorismate biosynthesis; chorismate from D-erythrose 4-phosphate and phosphoenolpyruvate: step 2/7. Functionally, catalyzes the conversion of 3-deoxy-D-arabino-heptulosonate 7-phosphate (DAHP) to dehydroquinate (DHQ). The polypeptide is 3-dehydroquinate synthase (Buchnera aphidicola subsp. Schizaphis graminum (strain Sg)).